The following is a 431-amino-acid chain: Forkhead box protein P3 (431 aa).

A disordered region spans residues 1–68 (MPNPRPGKPS…SSLNPMPPSQ (68 aa)). Residues 10–25 (SAPSLALGPSPGASPS) are compositionally biased toward low complexity. The residue at position 19 (Ser19) is a Phosphoserine; by CDK2. Lys31 bears the N6-acetyllysine mark. Positions 68-76 (QLQLPTLPL) match the Nuclear export signal motif. The LXXLL motif motif lies at 92 to 96 (LQALL). An essential for transcriptional repressor activity and for interaction with KAT5 and HDAC7 region spans residues 106–190 (LSTVDAHART…STLSAMPQSS (85 aa)). The segment at 149 to 199 (LPPGINVASLEWVSREPALLCTFPNPGAPRKDSTLSAMPQSSYPLLANGVC) is interaction with IKZF4. Residues 197–222 (GVCKWPGCEKVFEEPEDFLKHCQADH) form a C2H2-type zinc finger. The short motif at 239–248 (VQSLEQQLVL) is the Nuclear export signal element. The interval 239 to 260 (VQSLEQQLVLEKEKLSAMQAHL) is leucine-zipper. Glycyl lysine isopeptide (Lys-Gly) (interchain with G-Cter in ubiquitin) cross-links involve residues Lys250 and Lys252. N6-acetyllysine; alternate occurs at positions 263 and 268. Glycyl lysine isopeptide (Lys-Gly) (interchain with G-Cter in ubiquitin); alternate cross-links involve residues Lys263 and Lys268. The segment at 278–336 (GSCCIVAAGSQGSAVPAWSGPREAPDSLFAVRRHLWGSHGNSTFPEFLHNMDYFKFHNM) is interaction with RUNX1. Residues 337-423 (RPPFTYATLI…RKKRSQRPSR (87 aa)) constitute a DNA-binding region (fork-head). A Glycyl lysine isopeptide (Lys-Gly) (interchain with G-Cter in ubiquitin) cross-link involves residue Lys393. Residues 414-417 (RKKR) carry the Nuclear localization signal motif. Ser418 bears the Phosphoserine mark. A propeptide spanning residues 418–431 (SQRPSRCSNPTPGP) is cleaved from the precursor.

Homodimer. Dimerization is essential for its transcriptional regulator activity. Interacts with IKZF3. Interacts (via LXXLL motif) with RORA (via AF-2 motif). Interacts with HDAC9 in the absence of T-cell stimulation. Interacts with PPP1CA, PPP1CB, PPP1CG, KAT5, HDAC7, HSPA8, USP7, STUB1, HSPA1A/B, RUNX1, RUNX2, RUNX3, RELA, NFATC2, IKFZ4 and RORC. In terms of processing, phosphorylation at Ser-418 regulates its transcriptional repressor activity and consequently, regulatory T-cells (Treg) suppressive function. Phosphorylation by CDK2 negatively regulates its transcriptional activity and protein stability. Post-translationally, polyubiquitinated, leading to its proteasomal degradation in regulatory T-cells (Treg) which is mediated by STUB1 in a HSPA1A/B-dependent manner. Deubiquitinated by USP7 and USP44 leading to increase in protein stability. Acetylation on lysine residues stabilizes FOXP3 and promotes differentiation of T-cells into induced regulatory T-cells (iTregs) associated with suppressive functions. Acetylation is mediated by a coordinated action of KAT5 and EP300/p300 acetyltransferases: EP300/p300 is required to enhance KAT5 autoacetylation, promoting acetylation of FOXP3 by KAT5. Deacetylated by SIRT1. In terms of processing, undergoes proteolytic cleavage in activated regulatory T-cells (Treg), and can be cleaved at either the N- or C-terminal site, or at both sites.

It is found in the nucleus. It localises to the cytoplasm. Its function is as follows. Transcriptional regulator which is crucial for the development and inhibitory function of regulatory T-cells (Treg). Plays an essential role in maintaining homeostasis of the immune system by allowing the acquisition of full suppressive function and stability of the Treg lineage, and by directly modulating the expansion and function of conventional T-cells. Can act either as a transcriptional repressor or a transcriptional activator depending on its interactions with other transcription factors, histone acetylases and deacetylases. The suppressive activity of Treg involves the coordinate activation of many genes, including CTLA4 and TNFRSF18 by FOXP3 along with repression of genes encoding cytokines such as interleukin-2 (IL2) and interferon-gamma (IFNG). Inhibits cytokine production and T-cell effector function by repressing the activity of two key transcription factors, RELA and NFATC2. Mediates transcriptional repression of IL2 via its association with histone acetylase KAT5 and histone deacetylase HDAC7. Can activate the expression of TNFRSF18, IL2RA and CTLA4 and repress the expression of IL2 and IFNG via its association with transcription factor RUNX1. Inhibits the differentiation of IL17 producing helper T-cells (Th17) by antagonizing RORC function, leading to down-regulation of IL17 expression, favoring Treg development. Inhibits the transcriptional activator activity of RORA. Can repress the expression of IL2 and IFNG via its association with transcription factor IKZF4. This Macaca fascicularis (Crab-eating macaque) protein is Forkhead box protein P3 (FOXP3).